The following is a 215-amino-acid chain: Cytochrome b6 (215 aa).

A helical transmembrane segment spans residues 32 to 52; that stretch reads IFYCFGGIVFTCFLVQVATGF. C35 is a binding site for heme c. H86 and H100 together coordinate heme b. 3 consecutive transmembrane segments (helical) span residues 90-110, 116-136, and 186-206; these read ASMM…TGGF, LTWV…VTGY, and AHTF…FLMI. 2 residues coordinate heme b: H187 and H202.

Belongs to the cytochrome b family. PetB subfamily. As to quaternary structure, the 4 large subunits of the cytochrome b6-f complex are cytochrome b6, subunit IV (17 kDa polypeptide, PetD), cytochrome f and the Rieske protein, while the 4 small subunits are PetG, PetL, PetM and PetN. The complex functions as a dimer. The cofactor is heme b. Heme c serves as cofactor.

It localises to the plastid. The protein localises to the chloroplast thylakoid membrane. In terms of biological role, component of the cytochrome b6-f complex, which mediates electron transfer between photosystem II (PSII) and photosystem I (PSI), cyclic electron flow around PSI, and state transitions. The sequence is that of Cytochrome b6 from Skeletonema costatum (Marine centric diatom).